The following is a 492-amino-acid chain: Fibroblast growth factor receptor substrate 3 (492 aa).

A lipid anchor (N-myristoyl glycine) is attached at Gly2. The 103-residue stretch at 13–115 (VPDNHPTKFK…QCNSINVMEE (103 aa)) folds into the IRS-type PTB domain. 3 disordered regions span residues 153 to 173 (GEGP…RHPS), 338 to 455 (QLGG…SDSY), and 467 to 492 (SNLQ…DLPL).

Binds NTRK1. Binds FGFR1, NGFR, GRB2, PTPN11 and ERK2. In terms of processing, phosphorylated by ULK2 in vitro. Phosphorylated on tyrosine residues upon stimulation by BFGF or NGFB.

Its subcellular location is the membrane. Functionally, adapter protein that links FGF and NGF receptors to downstream signaling pathways. Involved in the activation of MAP kinases. Down-regulates ERK2 signaling by interfering with the phosphorylation and nuclear translocation of ERK2. The protein is Fibroblast growth factor receptor substrate 3 (FRS3) of Homo sapiens (Human).